The sequence spans 558 residues: Proline--tRNA ligase (558 aa).

Belongs to the class-II aminoacyl-tRNA synthetase family. ProS type 1 subfamily. Homodimer.

It localises to the cytoplasm. The catalysed reaction is tRNA(Pro) + L-proline + ATP = L-prolyl-tRNA(Pro) + AMP + diphosphate. In terms of biological role, catalyzes the attachment of proline to tRNA(Pro) in a two-step reaction: proline is first activated by ATP to form Pro-AMP and then transferred to the acceptor end of tRNA(Pro). As ProRS can inadvertently accommodate and process non-cognate amino acids such as alanine and cysteine, to avoid such errors it has two additional distinct editing activities against alanine. One activity is designated as 'pretransfer' editing and involves the tRNA(Pro)-independent hydrolysis of activated Ala-AMP. The other activity is designated 'posttransfer' editing and involves deacylation of mischarged Ala-tRNA(Pro). The misacylated Cys-tRNA(Pro) is not edited by ProRS. This is Proline--tRNA ligase from Coprothermobacter proteolyticus (strain ATCC 35245 / DSM 5265 / OCM 4 / BT).